A 589-amino-acid polypeptide reads, in one-letter code: Zinc finger protein 703 (589 aa).

Positions 102–315 (SQIGKPDPPP…GTGHIAPVSP (214 aa)) are disordered. Low complexity predominate over residues 113 to 122 (SKLGSLSSSS). The span at 137–148 (SGEHQNLDDKSS) shows a compositional bias: basic and acidic residues. The segment covering 179–188 (NGSSSSVTCT) has biased composition (polar residues). Residues 196–206 (SPRASSPQQTS) show a composition bias toward low complexity. Positions 214–230 (QSQSPLSQKTAHLQTTH) are enriched in polar residues. Low complexity predominate over residues 237–250 (GSDPGNDSSSSGSD). Residues 251–262 (RNGKKDSDHNKS) are compositionally biased toward basic and acidic residues. Positions 272–299 (SSHARASVNSSSASSSSSPQPDSKTDSQ) are enriched in low complexity. The required for interaction with Groucho and hdac2 plays an important role in repression of transcription stretch occupies residues 408-460 (VHDPSSALKSGFPLMYPTHHLHSLHPSSLSSSATSSLSHPLYTYGFMLPNETL). Residues 462–490 (HACNWVSVGGPCDKRFATSEELLAHLRTH) form a C2H2-type zinc finger. The tract at residues 498–589 (GKLLSGYPSS…LGSASALGYQ (92 aa)) is required for self-association and nuclear localization.

It belongs to the Elbow/Noc family. In terms of assembly, self-associates. Interacts with nlz2. May interact with Groucho corepressor proteins.

It is found in the nucleus. Its subcellular location is the cytoplasm. In terms of biological role, transcriptional corepressor which does not bind directly to DNA and may regulate transcription through recruitment of histone deacetylases to gene promoters. Required for segmental gene expression during hindbrain development. May regulate cell adhesion, migration and proliferation. In Danio rerio (Zebrafish), this protein is Zinc finger protein 703 (znf703).